The following is a 189-amino-acid chain: UPF0301 protein RP032 (189 aa).

This sequence belongs to the UPF0301 (AlgH) family.

The chain is UPF0301 protein RP032 from Rickettsia prowazekii (strain Madrid E).